The following is a 61-amino-acid chain: Small ribosomal subunit protein uS14B (61 aa).

4 residues coordinate Zn(2+): Cys-24, Cys-27, Cys-40, and Cys-43.

The protein belongs to the universal ribosomal protein uS14 family. Zinc-binding uS14 subfamily. Part of the 30S ribosomal subunit. Contacts proteins S3 and S10. Zn(2+) serves as cofactor.

Binds 16S rRNA, required for the assembly of 30S particles and may also be responsible for determining the conformation of the 16S rRNA at the A site. This Bacillus velezensis (strain DSM 23117 / BGSC 10A6 / LMG 26770 / FZB42) (Bacillus amyloliquefaciens subsp. plantarum) protein is Small ribosomal subunit protein uS14B.